A 377-amino-acid chain; its full sequence is Chaperone MoxR1 (377 aa).

Positions 1–33 (MTSAGGFPAGAGGYQTPGGHSASPAHEAPPGGA) are disordered. The segment covering 7–16 (FPAGAGGYQT) has biased composition (gly residues). Residues 19–33 (GHSASPAHEAPPGGA) show a composition bias toward low complexity. Residue 78 to 85 (GVPGVAKT) coordinates ATP.

Belongs to the MoxR family. In terms of assembly, interacts with RipA. Interacts with host Toll-like receptor 4 (TLR4).

Functionally, displays ATP-enhanced chaperone activity. Required for the proper folding of the peptidoglycan endopeptidase RipA and its secretion through the TAT secretion system. In vitro, prevents thermal aggregation of MalZ protein and protects the functional activity of the restriction enzyme NdeI from thermal inactivation. Could be a moonlighting protein that uses a multipronged approach to dampen host-directed immunity for efficient replication, survival and pathogenesis. Can enhance virulence by inhibiting autophagy and apoptosis, and disrupting cellular bioenergetics. Binds and activates host TLR4 on the surface of macrophage cells, leading to the activation of the host NFKB and MAPK signaling cascades and enhanced secretion of proinflammatory cytokines. Inhibits autophagic flux via activation of PI3K-AKT-MTOR-ULK1 signaling cascade and represses apoptosis via inhibiting protooncogene c-FOS and MAPK JNK1/2. Also induces robust disruption of cellular bioenergetics by metabolic reprogramming to rewire the citric acid cycle intermediates for its benefit. In Mycobacterium tuberculosis (strain ATCC 25618 / H37Rv), this protein is Chaperone MoxR1.